The following is a 208-amino-acid chain: EF-hand protein 5 variant 2 (208 aa).

Residues 1 to 35 (MQARGTVKVQGDANVDGKMSTGQHPHHQHLNSTQA) form a disordered region. EF-hand domains are found at residues 64-98 (MAEG…HLTE), 99-134 (EEFH…EVDD), 135-170 (TMAD…LAER), and 171-206 (STPE…SRVN). Ca(2+)-binding residues include Glu118, Asp123, Asp148, Thr152, and Tyr154.

This Trypanosoma cruzi protein is EF-hand protein 5 variant 2.